A 212-amino-acid polypeptide reads, in one-letter code: RNA chaperone ProQ (212 aa).

Basic and acidic residues-rich tracts occupy residues 102 to 124 (ALKE…EKAK) and 132 to 144 (RKAD…DKPK). Residues 102 to 149 (ALKESKERVFASRRTNTKEEKAKQPRRPAPRKADAAAKSDKPKAAPKA) are disordered.

It belongs to the ProQ family.

The protein resides in the cytoplasm. Its function is as follows. RNA chaperone with significant RNA binding, RNA strand exchange and RNA duplexing activities. This chain is RNA chaperone ProQ, found in Aeromonas hydrophila subsp. hydrophila (strain ATCC 7966 / DSM 30187 / BCRC 13018 / CCUG 14551 / JCM 1027 / KCTC 2358 / NCIMB 9240 / NCTC 8049).